A 775-amino-acid chain; its full sequence is Meiotic driver SPOK2 (775 aa).

The stretch at 4-69 (KDRIAQLLRE…RCERERLQLE (66 aa)) forms a coiled coil. Disordered stretches follow at residues 18-51 (KARE…REEE), 211-249 (QKDD…YICS), 442-525 (LSSA…AMAD), and 734-761 (PPPK…AQLF). Over residues 444-457 (SAPSSQNTDISEYT) the composition is skewed to polar residues.

It localises to the cytoplasm. Its subcellular location is the nucleus. Functionally, promotes unequal transmission of alleles from the parental zygote to progeny spores by acting as poison/antidote system, leading to poisoning of progeny that do not inherit the allele. May possess DNA nuclease activity that leads to spore killing, and a kinase activity that confers resistance to the nuclease activity. The sequence is that of Meiotic driver SPOK2 from Podospora anserina (strain S / ATCC MYA-4624 / DSM 980 / FGSC 10383) (Pleurage anserina).